The primary structure comprises 644 residues: Cyclin-dependent kinase C-2 C (644 aa).

The Protein kinase domain occupies 105 to 389 (FQKLEKIGQG…ASSALNSEYF (285 aa)). Residues 111-119 (IGQGTYSSV) and Lys134 contribute to the ATP site. Tyr116 is modified (phosphotyrosine). The active-site Proton acceptor is the Asp229. Thr263 carries the post-translational modification Phosphothreonine. A Nuclear localization signal motif is present at residues 420-427 (RKRANLKL). Residues 565-576 (SKLSRIGERHGS) are compositionally biased toward basic and acidic residues. A disordered region spans residues 565-591 (SKLSRIGERHGSLDGSGLDFSQREEDS).

This sequence belongs to the protein kinase superfamily. CMGC Ser/Thr protein kinase family. CDC2/CDKX subfamily. In terms of processing, autophosphorylated. As to expression, expressed specifically in flowers and pollen.

It localises to the nucleus. The sequence is that of Cyclin-dependent kinase C-2 C from Arabidopsis thaliana (Mouse-ear cress).